We begin with the raw amino-acid sequence, 509 residues long: MRKPTALIILDGFGLREETYGNAVAQAKKPNFDGYWNKFPHTTLTACGEAVGLPEGQMGNSEVGHLNIGAGRIVYQSLTRVNVAIREGEFDKNETFQSAIKSVKEKGTALHLFGLLSDGGVHSHMNHMFALLRLAAKEGVEKVYIHAFLDGRDVGPKTAQSYIDATNEVIKETGVGQFATISGRYYSMDRDKRWDRVEKCYRAMVNGEGPTYKSAEECVEDSYANGIYDEFVLPSVIVNEDNTPVATINDDDAVIFYNFRPDRAIQIARVFTNEDFREFDRGEKVPHIPEFVCMTHFSETVDGYVAFKPMNLDNTLGEVVAQAGLKQLRIAETEKYPHVTFFFSGGREAEFPGEERILINSPKVATYDLKPEMSIYEVTDALVNEIENDKHDVIILNFANCDMVGHSGMMEPTIKAVEATDECLGKVVEAILAKDGVALITADHGNADEELTSDGEPMTAHTTNPVPFIVTKNDVELREGGILGDIAPXMLTLLGVEQPKEMTGKTIIK.

Asp-11 contacts Mn(2+). A Phosphotyrosine modification is found at Tyr-35. Residue Ser-61 coordinates Mn(2+). The active-site Phosphoserine intermediate is Ser-61. Residues His-122, 152–153 (RD), Arg-184, Arg-190, 260–263 (RPDR), and Lys-335 each bind substrate. Positions 402, 406, 443, 444, and 461 each coordinate Mn(2+).

This sequence belongs to the BPG-independent phosphoglycerate mutase family. Monomer. Mn(2+) serves as cofactor.

The catalysed reaction is (2R)-2-phosphoglycerate = (2R)-3-phosphoglycerate. The protein operates within carbohydrate degradation; glycolysis; pyruvate from D-glyceraldehyde 3-phosphate: step 3/5. Essential for rapid growth and for sporulation. Catalyzes the interconversion of 2-phosphoglycerate and 3-phosphoglycerate. In Bacillus cereus (strain ATCC 10987 / NRS 248), this protein is 2,3-bisphosphoglycerate-independent phosphoglycerate mutase.